The chain runs to 378 residues: tRNA-specific 2-thiouridylase MnmA (378 aa).

Residues 9 to 16 (GVSGGVDS) and methionine 35 contribute to the ATP site. The tract at residues 94–96 (NPD) is interaction with target base in tRNA. Cysteine 99 serves as the catalytic Nucleophile. The cysteines at positions 99 and 195 are disulfide-linked. Residue glycine 123 participates in ATP binding. The tract at residues 145-147 (KDQ) is interaction with tRNA. Cysteine 195 (cysteine persulfide intermediate) is an active-site residue. The segment at 307 to 308 (RY) is interaction with tRNA.

Belongs to the MnmA/TRMU family.

Its subcellular location is the cytoplasm. It carries out the reaction S-sulfanyl-L-cysteinyl-[protein] + uridine(34) in tRNA + AH2 + ATP = 2-thiouridine(34) in tRNA + L-cysteinyl-[protein] + A + AMP + diphosphate + H(+). Catalyzes the 2-thiolation of uridine at the wobble position (U34) of tRNA, leading to the formation of s(2)U34. The polypeptide is tRNA-specific 2-thiouridylase MnmA (Xanthomonas euvesicatoria pv. vesicatoria (strain 85-10) (Xanthomonas campestris pv. vesicatoria)).